Here is a 131-residue protein sequence, read N- to C-terminus: Peptide methionine sulfoxide reductase MsrB (131 aa).

The MsrB domain occupies 8–130 (LDEWRSMLDP…NSVCIDLRPR (123 aa)). The Zn(2+) site is built by cysteine 47, cysteine 50, cysteine 96, and cysteine 99. Cysteine 119 (nucleophile) is an active-site residue.

Belongs to the MsrB Met sulfoxide reductase family. It depends on Zn(2+) as a cofactor.

The catalysed reaction is L-methionyl-[protein] + [thioredoxin]-disulfide + H2O = L-methionyl-(R)-S-oxide-[protein] + [thioredoxin]-dithiol. This is Peptide methionine sulfoxide reductase MsrB from Pseudomonas putida (strain GB-1).